The sequence spans 578 residues: Arginine--tRNA ligase (578 aa).

Residues 127–137 carry the 'HIGH' region motif; the sequence is PNLAKEMHVGH.

Belongs to the class-I aminoacyl-tRNA synthetase family. In terms of assembly, monomer.

It is found in the cytoplasm. It carries out the reaction tRNA(Arg) + L-arginine + ATP = L-arginyl-tRNA(Arg) + AMP + diphosphate. This Pseudomonas entomophila (strain L48) protein is Arginine--tRNA ligase.